The sequence spans 631 residues: Nucleoside triphosphatase I (631 aa).

The region spanning 42–204 is the Helicase ATP-binding domain; it reads FLGLDTMHSI…TMIVNLLRPK (163 aa). An ATP-binding site is contributed by 55 to 62; sequence HDTGVGKT. A DEXH box motif is present at residues 141–144; it reads DECH. Residues 367-536 form the Helicase C-terminal domain; the sequence is KFTEVCLKIL…LFKVFKESSI (170 aa). Residues 457 to 524 form a binding to the cap-specific mRNA (nucleoside-2'-O-)-methyltransferase region; that stretch reads DIFILDMTWN…NIIKTKSKEF (68 aa).

Belongs to the helicase family. NPH I subfamily. Monomer. Interacts (via C-terminus) with RAP94 (via N-terminus). Interacts with the cap-specific mRNA (nucleoside-2'-O-)-methyltransferase.

The protein resides in the virion. The enzyme catalyses a ribonucleoside 5'-triphosphate + H2O = a ribonucleoside 5'-diphosphate + phosphate + H(+). Functionally, DNA-dependent ATPase required for providing the needed energy to achieve the termination of early transcripts. Acts in concert with the RAP94 subunit of the virion RNA polymerase and the capping enzyme/VTF to catalyze release of UUUUUNU-containing nascent RNA from the elongation complex. NPH-I must bind ssDNA in order to exhibit ATPase activity. The chain is Nucleoside triphosphatase I (NPH1) from Erythrocebus patas (Red guenon).